A 912-amino-acid polypeptide reads, in one-letter code: Probable dipeptidyl-aminopeptidase B (912 aa).

Disordered stretches follow at residues 1-30 (MAAEKGGSSDEERKPLTRGSMEYRDSSNSL) and 48-68 (NGSTHDTGPDEIGRGDRDYSD). Topologically, residues 1–92 (MAAEKGGSSD…GGKPVQKKVK (92 aa)) are cytoplasmic. Basic and acidic residues-rich tracts occupy residues 7 to 25 (GSSDEERKPLTRGSMEYRD) and 54 to 67 (TGPDEIGRGDRDYS). A helical; Signal-anchor for type II membrane protein membrane pass occupies residues 93 to 113 (IVLGFLLFLCLSGWSLAFVLF). Residues 114–912 (LFGGHESSKT…RAATWVGMSI (799 aa)) are Vacuolar-facing. N-linked (GlcNAc...) asparagine glycosylation is found at Asn-130, Asn-210, Asn-346, Asn-569, and Asn-656. The active-site Charge relay system is the Ser-751. Residue Asn-810 is glycosylated (N-linked (GlcNAc...) asparagine). Catalysis depends on charge relay system residues Asp-828 and His-861. Asn-897 carries an N-linked (GlcNAc...) asparagine glycan.

The protein belongs to the peptidase S9B family.

It is found in the vacuole membrane. The catalysed reaction is Release of an N-terminal dipeptide, Xaa-Yaa-|-Zaa-, from a polypeptide, preferentially when Yaa is Pro, provided Zaa is neither Pro nor hydroxyproline.. Type IV dipeptidyl-peptidase which removes N-terminal dipeptides sequentially from polypeptides having unsubstituted N-termini provided that the penultimate residue is proline. This is Probable dipeptidyl-aminopeptidase B (DAPB) from Paracoccidioides brasiliensis (strain Pb18).